Reading from the N-terminus, the 349-residue chain is uncharacterized protein (349 aa).

This is an uncharacterized protein from Escherichia coli (strain K12).